Consider the following 242-residue polypeptide: Large ribosomal subunit protein uL1 (242 aa).

It belongs to the universal ribosomal protein uL1 family. Part of the 50S ribosomal subunit.

Functionally, binds directly to 23S rRNA. The L1 stalk is quite mobile in the ribosome, and is involved in E site tRNA release. Protein L1 is also a translational repressor protein, it controls the translation of the L11 operon by binding to its mRNA. In Kitasatospora aureofaciens (Streptomyces aureofaciens), this protein is Large ribosomal subunit protein uL1.